The primary structure comprises 179 residues: Large ribosomal subunit protein uL5c (179 aa).

The protein belongs to the universal ribosomal protein uL5 family. As to quaternary structure, part of the 50S ribosomal subunit; contacts the 5S rRNA.

It localises to the plastid. It is found in the chloroplast. Binds 5S rRNA, forms part of the central protuberance of the 50S subunit. In Gracilaria tenuistipitata var. liui (Red alga), this protein is Large ribosomal subunit protein uL5c (rpl5).